We begin with the raw amino-acid sequence, 115 residues long: Double-headed protease inhibitor, submandibular gland (115 aa).

Kazal-like domains lie at 6–66 (IGRE…ACDI) and 67–115 (ECTE…HGEC). Intrachain disulfides connect cysteine 12-cysteine 46, cysteine 24-cysteine 43, cysteine 32-cysteine 64, cysteine 68-cysteine 97, cysteine 75-cysteine 94, and cysteine 83-cysteine 115.

It localises to the secreted. Its function is as follows. This inhibitor is composed of two homologous actively inhibiting halves: one which inhibits trypsin, the other which inhibits elastase. The chain is Double-headed protease inhibitor, submandibular gland from Vulpes vulpes (Red fox).